A 372-amino-acid chain; its full sequence is Alpha-parvin (372 aa).

The segment covering 1-11 (MATSPQKSPSV) has biased composition (low complexity). The segment at 1-44 (MATSPQKSPSVPKSPTPKSPPSRKKDDSFLGKLGGTLARRKKAK) is disordered. At Ala-2 the chain carries N-acetylalanine. Residues Ser-8, Ser-14, and Ser-19 each carry the phosphoserine modification. The tract at residues 21–25 (PSRKK) is interaction with ARHGAP31. A phosphoserine mark is found at Ser-28 and Ser-62. Calponin-homology (CH) domains are found at residues 95–202 (QELM…QYFR) and 262–369 (NVVK…TKYR). The required for interaction with TESK1 and ILK stretch occupies residues 223 to 372 (GILQSRQIQE…NLFTKYRNVE (150 aa)).

Belongs to the parvin family. In terms of assembly, component of the heterotrimeric IPP (ILK-PINCH-PARVIN) complex composed of ILK, LIMS1/PINCH and PARVA; the complex binds to F-actin via the C-terminal tail of LIMS1 and the N-terminal region of PARVA, promoting F-actin filament bundling. Interacts with TGFB1I1. Interacts with ARHGAP31. Interacts with the actin cytoskeleton. Interacts (via C-terminus) with TESK1 (via C-terminus); the interaction inhibits TESK1 kinase activity. Interacts with PXN/PAXILLIN (via LD motif 4). As to expression, widely expressed.

The protein resides in the cell junction. It localises to the focal adhesion. It is found in the cell membrane. The protein localises to the cytoplasm. Its subcellular location is the cytoskeleton. The protein resides in the myofibril. It localises to the sarcomere. It is found in the z line. In terms of biological role, plays a role in sarcomere organization and in smooth muscle cell contraction. Required for normal development of the embryonic cardiovascular system, and for normal septation of the heart outflow tract. Plays a role in sprouting angiogenesis and is required for normal adhesion of vascular smooth muscle cells to endothelial cells during blood vessel development. Plays a role in the reorganization of the actin cytoskeleton, formation of lamellipodia and ciliogenesis. Plays a role in the establishment of cell polarity, cell adhesion, cell spreading, and directed cell migration. Within the IPP (ILK-PINCH-PARVIN) complex, binds to F-actin, promoting F-actin bundling, a process required to generate force for actin cytoskeleton reorganization and subsequent dynamic cell adhesion events such as cell spreading and migration. In Rattus norvegicus (Rat), this protein is Alpha-parvin (Parva).